The sequence spans 404 residues: V-set and immunoglobulin domain-containing protein 1 (404 aa).

A signal peptide spans 1-22 (MMVFAFWKVFLILNCLAGQVNM). The region spanning 23-133 (VQVTIPDTFV…DFFGKNQGIL (111 aa)) is the Ig-like V-type domain. Topologically, residues 23–233 (VQVTIPDTFV…EIDLTSSDPE (211 aa)) are extracellular. A glycan (N-linked (GlcNAc...) asparagine) is linked at N39. 2 cysteine pairs are disulfide-bonded: C44-C117 and C162-C212. Residues 141-228 (PSKPFCSIQG…GNSSCEIDLT (88 aa)) form the Ig-like C2-type domain. 2 N-linked (GlcNAc...) asparagine glycosylation sites follow: N201 and N220. A helical membrane pass occupies residues 234 to 254 (VGIIIGALVGALTGAAIIICV). Residues 255-404 (VYFARNKVKS…REEEKETVKA (150 aa)) are Cytoplasmic-facing. 2 disordered regions span residues 266 to 285 (QKNL…HHSR) and 298 to 404 (EGTL…TVKA). Residues S271 and S272 each carry the phosphoserine modification. The span at 301–314 (LPSSIHASHNTEPT) shows a compositional bias: polar residues. A compositionally biased stretch (acidic residues) spans 357–383 (MELEPETEPEPEPEPEPQPELESELEP). Basic and acidic residues predominate over residues 393 to 404 (PMREEEKETVKA).

It is found in the membrane. The chain is V-set and immunoglobulin domain-containing protein 1 (Vsig1) from Rattus norvegicus (Rat).